The sequence spans 861 residues: Bifunctional uridylyltransferase/uridylyl-removing enzyme (861 aa).

Positions 1-321 (MKNDNRIIKN…VYHQKQKIIR (321 aa)) are uridylyltransferase. Residues 322–678 (LDDEFQLSNR…IMPHHSQGGT (357 aa)) are uridylyl-removing. Positions 440 to 562 (VDQHTLFVIR…LPHARYLDYL (123 aa)) constitute an HD domain. ACT domains are found at residues 679–760 (EVFI…AVSR) and 788–861 (QLFL…KSKY).

Belongs to the GlnD family. Requires Mg(2+) as cofactor.

The enzyme catalyses [protein-PII]-L-tyrosine + UTP = [protein-PII]-uridylyl-L-tyrosine + diphosphate. The catalysed reaction is [protein-PII]-uridylyl-L-tyrosine + H2O = [protein-PII]-L-tyrosine + UMP + H(+). Uridylyltransferase (UTase) activity is inhibited by glutamine, while glutamine activates uridylyl-removing (UR) activity. Its function is as follows. Modifies, by uridylylation and deuridylylation, the PII regulatory proteins (GlnB and homologs), in response to the nitrogen status of the cell that GlnD senses through the glutamine level. Under low glutamine levels, catalyzes the conversion of the PII proteins and UTP to PII-UMP and PPi, while under higher glutamine levels, GlnD hydrolyzes PII-UMP to PII and UMP (deuridylylation). Thus, controls uridylylation state and activity of the PII proteins, and plays an important role in the regulation of nitrogen assimilation and metabolism. This is Bifunctional uridylyltransferase/uridylyl-removing enzyme from Legionella pneumophila subsp. pneumophila (strain Philadelphia 1 / ATCC 33152 / DSM 7513).